Here is a 1102-residue protein sequence, read N- to C-terminus: Carbamoyl phosphate synthase large chain (1102 aa).

A carboxyphosphate synthetic domain region spans residues 1-402 (MPKRTDLKSV…ALQKALRSLE (402 aa)). The ATP site is built by Arg-129, Arg-169, Gly-175, Gly-176, Glu-208, Ile-210, Glu-215, Gly-241, Val-242, His-243, Gln-285, and Glu-299. One can recognise an ATP-grasp 1 domain in the interval 133–328 (KGVVERCGAE…IAKIATKLSL (196 aa)). Mg(2+)-binding residues include Gln-285, Glu-299, and Asn-301. Mn(2+)-binding residues include Gln-285, Glu-299, and Asn-301. Residues 403–546 (QKGSQLDFSS…YHYSSYDEED (144 aa)) are oligomerization domain. The carbamoyl phosphate synthetic domain stretch occupies residues 547-950 (EVGLHAKPSV…AFAKSQAAAN (404 aa)). The ATP-grasp 2 domain occupies 677 to 868 (ARVLDEAGLT…MAKAAALIGT (192 aa)). Residues Arg-713, Arg-752, Leu-754, Glu-759, Gly-784, Ile-785, His-786, Ser-787, Gln-827, and Glu-839 each contribute to the ATP site. Mg(2+)-binding residues include Gln-827, Glu-839, and Asn-841. Gln-827, Glu-839, and Asn-841 together coordinate Mn(2+). Residues 951-1096 (NALPTEGKIF…QEHAANLSAA (146 aa)) form the MGS-like domain. Residues 951-1102 (NALPTEGKIF…LSAAMEAANA (152 aa)) are allosteric domain.

It belongs to the CarB family. Composed of two chains; the small (or glutamine) chain promotes the hydrolysis of glutamine to ammonia, which is used by the large (or ammonia) chain to synthesize carbamoyl phosphate. Tetramer of heterodimers (alpha,beta)4. Mg(2+) serves as cofactor. It depends on Mn(2+) as a cofactor.

It carries out the reaction hydrogencarbonate + L-glutamine + 2 ATP + H2O = carbamoyl phosphate + L-glutamate + 2 ADP + phosphate + 2 H(+). The enzyme catalyses hydrogencarbonate + NH4(+) + 2 ATP = carbamoyl phosphate + 2 ADP + phosphate + 2 H(+). It functions in the pathway amino-acid biosynthesis; L-arginine biosynthesis; carbamoyl phosphate from bicarbonate: step 1/1. The protein operates within pyrimidine metabolism; UMP biosynthesis via de novo pathway; (S)-dihydroorotate from bicarbonate: step 1/3. In terms of biological role, large subunit of the glutamine-dependent carbamoyl phosphate synthetase (CPSase). CPSase catalyzes the formation of carbamoyl phosphate from the ammonia moiety of glutamine, carbonate, and phosphate donated by ATP, constituting the first step of 2 biosynthetic pathways, one leading to arginine and/or urea and the other to pyrimidine nucleotides. The large subunit (synthetase) binds the substrates ammonia (free or transferred from glutamine from the small subunit), hydrogencarbonate and ATP and carries out an ATP-coupled ligase reaction, activating hydrogencarbonate by forming carboxy phosphate which reacts with ammonia to form carbamoyl phosphate. The sequence is that of Carbamoyl phosphate synthase large chain from Paenarthrobacter aurescens (strain TC1).